Consider the following 345-residue polypeptide: Holliday junction branch migration complex subunit RuvB (345 aa).

The large ATPase domain (RuvB-L) stretch occupies residues Met-1–Tyr-186. Residues Leu-25, Arg-26, Gly-67, Lys-70, Thr-71, Ser-72, Glu-133–Phe-135, Arg-176, Tyr-186, and Arg-223 each bind ATP. Thr-71 provides a ligand contact to Mg(2+). The segment at Glu-187–Asp-257 is small ATPAse domain (RuvB-S). The interval Glu-260–Glu-345 is head domain (RuvB-H). Residues Arg-315 and Arg-320 each coordinate DNA.

Belongs to the RuvB family. As to quaternary structure, homohexamer. Forms an RuvA(8)-RuvB(12)-Holliday junction (HJ) complex. HJ DNA is sandwiched between 2 RuvA tetramers; dsDNA enters through RuvA and exits via RuvB. An RuvB hexamer assembles on each DNA strand where it exits the tetramer. Each RuvB hexamer is contacted by two RuvA subunits (via domain III) on 2 adjacent RuvB subunits; this complex drives branch migration. In the full resolvosome a probable DNA-RuvA(4)-RuvB(12)-RuvC(2) complex forms which resolves the HJ.

It is found in the cytoplasm. It carries out the reaction ATP + H2O = ADP + phosphate + H(+). Its function is as follows. The RuvA-RuvB-RuvC complex processes Holliday junction (HJ) DNA during genetic recombination and DNA repair, while the RuvA-RuvB complex plays an important role in the rescue of blocked DNA replication forks via replication fork reversal (RFR). RuvA specifically binds to HJ cruciform DNA, conferring on it an open structure. The RuvB hexamer acts as an ATP-dependent pump, pulling dsDNA into and through the RuvAB complex. RuvB forms 2 homohexamers on either side of HJ DNA bound by 1 or 2 RuvA tetramers; 4 subunits per hexamer contact DNA at a time. Coordinated motions by a converter formed by DNA-disengaged RuvB subunits stimulates ATP hydrolysis and nucleotide exchange. Immobilization of the converter enables RuvB to convert the ATP-contained energy into a lever motion, pulling 2 nucleotides of DNA out of the RuvA tetramer per ATP hydrolyzed, thus driving DNA branch migration. The RuvB motors rotate together with the DNA substrate, which together with the progressing nucleotide cycle form the mechanistic basis for DNA recombination by continuous HJ branch migration. Branch migration allows RuvC to scan DNA until it finds its consensus sequence, where it cleaves and resolves cruciform DNA. This Mycobacterium ulcerans (strain Agy99) protein is Holliday junction branch migration complex subunit RuvB.